The following is a 298-amino-acid chain: Mimecan (298 aa).

An N-terminal signal peptide occupies residues 1–20 (MKTLQSTLLLLLLVPLIKPA). T80 is a glycosylation site (O-linked (GalNAc...) threonine). N-linked (GlcNAc...) (keratan sulfate) asparagine glycosylation is present at N88. LRR repeat units lie at residues 112-131 (DAVPPLPKESAYLYARFNKI), 132-155 (KKLTAKDFADIPNLRRLDFTGNLI), 156-179 (EDIEDGTFSKLSLLEELSLAENQL), 180-199 (LKLPVLPPKLTLFNAKYNKI), 200-225 (KSRGIKANAFKKLNNLTFLYLDHNAL), 226-246 (ESVPLNLPESLRVIHLQFNNI), and 247-277 (ASITDDTFCKANDTSYIRDRIEEIRLEGNPI). N214 carries N-linked (GlcNAc...) (keratan sulfate) asparagine glycosylation. A disulfide bridge connects residues C255 and C288. The N-linked (GlcNAc...) (keratan sulfate) asparagine glycan is linked to N258.

This sequence belongs to the small leucine-rich proteoglycan (SLRP) family. SLRP class III subfamily. In terms of processing, O-glycosylated with a core 1 or possibly core 8 glycan. Post-translationally, contains keratan sulfate. As to expression, bone.

It is found in the secreted. The protein resides in the extracellular space. The protein localises to the extracellular matrix. In terms of biological role, induces bone formation in conjunction with TGF-beta-1 or TGF-beta-2. This chain is Mimecan (OGN), found in Homo sapiens (Human).